A 283-amino-acid chain; its full sequence is Ribosomal RNA small subunit methyltransferase A (283 aa).

The S-adenosyl-L-methionine site is built by N22, L24, G49, E70, and N113.

This sequence belongs to the class I-like SAM-binding methyltransferase superfamily. rRNA adenine N(6)-methyltransferase family. RsmA subfamily.

Its subcellular location is the cytoplasm. It catalyses the reaction adenosine(1518)/adenosine(1519) in 16S rRNA + 4 S-adenosyl-L-methionine = N(6)-dimethyladenosine(1518)/N(6)-dimethyladenosine(1519) in 16S rRNA + 4 S-adenosyl-L-homocysteine + 4 H(+). Functionally, specifically dimethylates two adjacent adenosines (A1518 and A1519) in the loop of a conserved hairpin near the 3'-end of 16S rRNA in the 30S particle. May play a critical role in biogenesis of 30S subunits. The chain is Ribosomal RNA small subunit methyltransferase A from Myxococcus xanthus (strain DK1622).